A 147-amino-acid chain; its full sequence is VEWTDAERTAILTLWKKINIDEIGPCAMRRLLIVSPWTQRHFSTFGNISTNAAIMDNDLVAKHGSTVMGGLDRAIKNMDDIKGAYRELSKKHSDQLHVDPDNFRLLAECITLCVAGKFGPKEFTADVHEAWYKFLAAVTSALSRQYH.

Residues glutamate 2–histidine 147 form the Globin domain. Heme b-binding residues include histidine 63 and histidine 92.

Belongs to the globin family. As to quaternary structure, heterotetramer of two alpha chains and two beta chains. In terms of tissue distribution, red blood cells.

Its function is as follows. Involved in oxygen transport from gills to the various peripheral tissues. The sequence is that of Hemoglobin subunit beta-3 (hbb3) from Muraena helena (Mediterranean moray).